Consider the following 767-residue polypeptide: Photosystem I P700 chlorophyll a apoprotein A1 (767 aa).

Positions 1–22 (MTISPPESGEKNKKVLEDPVKA) are disordered. A compositionally biased stretch (basic and acidic residues) spans 8-22 (SGEKNKKVLEDPVKA). 8 helical membrane-spanning segments follow: residues 76–99 (IFSA…FHGA), 162–185 (LMAL…YHYH), 201–225 (LNHH…HIGA), 309–327 (IAHH…GHLY), 368–391 (RHAQ…HHMY), 407–433 (LGLF…IAMV), 455–477 (ALIS…LYIH), and 558–576 (LMIH…LILL). 2 residues coordinate [4Fe-4S] cluster: C600 and C609. 2 helical membrane passes run 616–637 (HVFL…HFSW) and 681–703 (ISMY…MFLF). Divinylchlorophyll a' is bound at residue H692. Divinyl chlorophyll a-binding residues include M700 and Y708. W709 contributes to the phylloquinone binding site. Residues 741–761 (AVGVAHFLLGGIATTWAFFHA) form a helical membrane-spanning segment.

This sequence belongs to the PsaA/PsaB family. As to quaternary structure, the PsaA/B heterodimer binds the P700 divinyl chlorophyll special pair and subsequent electron acceptors. PSI consists of a core antenna complex that captures photons, and an electron transfer chain that converts photonic excitation into a charge separation. The cyanobacterial PSI reaction center is composed of one copy each of PsaA,B,C,D,E,F,I,J,K,L,M and X, and forms trimeric complexes. PSI electron transfer chain: 5 divinyl chlorophyll a, 1 divinyl chlorophyll a', 2 phylloquinones and 3 4Fe-4S clusters. PSI core antenna: 90 divinyl chlorophyll a, 22 carotenoids, 3 phospholipids and 1 galactolipid. P700 is a divinyl chlorophyll a/divinyl chlorophyll a' dimer, A0 is one or more divinyl chlorophyll a, A1 is one or both phylloquinones and FX is a shared 4Fe-4S iron-sulfur center. is required as a cofactor.

The protein resides in the cellular thylakoid membrane. It catalyses the reaction reduced [plastocyanin] + hnu + oxidized [2Fe-2S]-[ferredoxin] = oxidized [plastocyanin] + reduced [2Fe-2S]-[ferredoxin]. Its function is as follows. PsaA and PsaB bind P700, the primary electron donor of photosystem I (PSI), as well as the electron acceptors A0, A1 and FX. PSI is a plastocyanin/cytochrome c6-ferredoxin oxidoreductase, converting photonic excitation into a charge separation, which transfers an electron from the donor P700 chlorophyll pair to the spectroscopically characterized acceptors A0, A1, FX, FA and FB in turn. Oxidized P700 is reduced on the lumenal side of the thylakoid membrane by plastocyanin or cytochrome c6. This is Photosystem I P700 chlorophyll a apoprotein A1 from Prochlorococcus marinus (strain MIT 9312).